The primary structure comprises 103 residues: Small ribosomal subunit protein bS20 (103 aa).

A compositionally biased stretch (basic residues) spans 1-20 (MATAKPKKKNPRLASGRKRV). Residues 1–31 (MATAKPKKKNPRLASGRKRVRQDTKLNAANT) form a disordered region.

The protein belongs to the bacterial ribosomal protein bS20 family.

In terms of biological role, binds directly to 16S ribosomal RNA. This chain is Small ribosomal subunit protein bS20, found in Polaromonas sp. (strain JS666 / ATCC BAA-500).